The sequence spans 592 residues: Aspartate--tRNA ligase (592 aa).

Residue Glu-173 coordinates L-aspartate. Residues 197 to 200 (QLFK) form an aspartate region. Arg-219 provides a ligand contact to L-aspartate. ATP contacts are provided by residues 219–221 (RDE) and Gln-228. Residue His-448 participates in L-aspartate binding. Glu-482 contacts ATP. Arg-489 is a binding site for L-aspartate. 534 to 537 (GLDR) is an ATP binding site.

It belongs to the class-II aminoacyl-tRNA synthetase family. Type 1 subfamily. As to quaternary structure, homodimer.

The protein resides in the cytoplasm. The enzyme catalyses tRNA(Asp) + L-aspartate + ATP = L-aspartyl-tRNA(Asp) + AMP + diphosphate. In terms of biological role, catalyzes the attachment of L-aspartate to tRNA(Asp) in a two-step reaction: L-aspartate is first activated by ATP to form Asp-AMP and then transferred to the acceptor end of tRNA(Asp). In Shewanella baltica (strain OS223), this protein is Aspartate--tRNA ligase.